The following is a 275-amino-acid chain: Probable ABC transporter permease protein PH1216 (275 aa).

The next 6 helical transmembrane spans lie at 10 to 30 (LLYI…WSAI), 73 to 93 (IFTT…GFTI), 105 to 125 (LLAL…IPLV), 137 to 157 (ILGL…LLFT), 181 to 203 (IYTK…YQFT), and 241 to 261 (IQMA…IALG). The 193-residue stretch at 68-260 (ILNSLIFTTF…LPTLLIMIAL (193 aa)) folds into the ABC transmembrane type-1 domain.

It belongs to the binding-protein-dependent transport system permease family. MalFG subfamily.

The protein resides in the cell membrane. Its function is as follows. Probably part of a binding-protein-dependent transport system PH1214/15/16. Probably responsible for the translocation of the substrate across the membrane. In Pyrococcus horikoshii (strain ATCC 700860 / DSM 12428 / JCM 9974 / NBRC 100139 / OT-3), this protein is Probable ABC transporter permease protein PH1216.